Consider the following 78-residue polypeptide: Antitoxin VapB27 (78 aa).

The SpoVT-AbrB domain occupies 1-45; sequence MKAVVDAAGRIVVPKPLREALGLQPGSTVEISRYGAGLHLIPTGR.

It belongs to the VapB family. In terms of assembly, interacts with cognate toxin VapC27 and non-cognate toxins MazF6 and VapC40. Interaction with MazF6 and MazF9 partially neutralizes the toxins.

Its function is as follows. Antitoxin component of a type II toxin-antitoxin (TA) system. Cognate toxin is VapC27. Upon expression in E.coli partially counteracts the ribonuclease activity of non-cognate toxins MazF6 and MazF9. The chain is Antitoxin VapB27 (vapB27) from Mycobacterium tuberculosis (strain ATCC 25618 / H37Rv).